A 179-amino-acid chain; its full sequence is MLLANYGACEVDRVRHLEEAFCCIAATRMADIPVVNRALSVEALGFEQCAESAGGSDGEMGILITPWFMNLIWLAPYGPCLGERDASTLPVGKTCMRRFGSHDFEFIGASEPQFGPYQFCSLFSPMFEFANQASARATATEVLRLLRASPDAPLPPTCAPHRDRRGFLFGRRRIEGESL.

In Cupriavidus necator (strain ATCC 17699 / DSM 428 / KCTC 22496 / NCIMB 10442 / H16 / Stanier 337) (Ralstonia eutropha), this protein is Protein HoxT (hoxT).